A 315-amino-acid polypeptide reads, in one-letter code: Tubulin beta-1 chain (315 aa).

Residues Ser6, Gly10, Thr11, Gly12, Asn72, and Asn94 each contribute to the GTP site. The disordered stretch occupies residues 295-315 (DATADEEEYYEDEEEEEAQGM). The span at 297–315 (TADEEEYYEDEEEEEAQGM) shows a compositional bias: acidic residues.

Belongs to the tubulin family. Dimer of alpha and beta chains. A typical microtubule is a hollow water-filled tube with an outer diameter of 25 nm and an inner diameter of 15 nM. Alpha-beta heterodimers associate head-to-tail to form protofilaments running lengthwise along the microtubule wall with the beta-tubulin subunit facing the microtubule plus end conferring a structural polarity. Microtubules usually have 13 protofilaments but different protofilament numbers can be found in some organisms and specialized cells. Requires Mg(2+) as cofactor.

Its subcellular location is the cytoplasm. It localises to the cytoskeleton. Its function is as follows. Tubulin is the major constituent of microtubules, a cylinder consisting of laterally associated linear protofilaments composed of alpha- and beta-tubulin heterodimers. Microtubules grow by the addition of GTP-tubulin dimers to the microtubule end, where a stabilizing cap forms. Below the cap, tubulin dimers are in GDP-bound state, owing to GTPase activity of alpha-tubulin. This chain is Tubulin beta-1 chain (TUBB1), found in Daucus carota (Wild carrot).